A 78-amino-acid chain; its full sequence is Translation initiation factor IF-1, chloroplastic (78 aa).

The S1-like domain maps to 1–72 (MEKQKLIDME…TKGRITYRLR (72 aa)).

The protein belongs to the IF-1 family. Component of the 30S ribosomal translation pre-initiation complex which assembles on the 30S ribosome in the order IF-2 and IF-3, IF-1 and N-formylmethionyl-tRNA(fMet); mRNA recruitment can occur at any time during PIC assembly.

It is found in the plastid. The protein localises to the chloroplast. Functionally, one of the essential components for the initiation of protein synthesis. Stabilizes the binding of IF-2 and IF-3 on the 30S subunit to which N-formylmethionyl-tRNA(fMet) subsequently binds. Helps modulate mRNA selection, yielding the 30S pre-initiation complex (PIC). Upon addition of the 50S ribosomal subunit IF-1, IF-2 and IF-3 are released leaving the mature 70S translation initiation complex. This Marchantia polymorpha (Common liverwort) protein is Translation initiation factor IF-1, chloroplastic.